The following is a 347-amino-acid chain: D-alanine--D-alanine ligase (347 aa).

Positions 134–332 (KLYAKDLGVK…LAQSLPKTPK (199 aa)) constitute an ATP-grasp domain. 161 to 216 (LIGFNFPFIVKPSNAGSSLGVNVVKEEKELIYALDSAFEYSKEVLIEPFIQGVKEY) provides a ligand contact to ATP. 3 residues coordinate Mg(2+): aspartate 288, glutamate 300, and asparagine 302.

This sequence belongs to the D-alanine--D-alanine ligase family. Mg(2+) is required as a cofactor. The cofactor is Mn(2+).

The protein resides in the cytoplasm. It carries out the reaction 2 D-alanine + ATP = D-alanyl-D-alanine + ADP + phosphate + H(+). It functions in the pathway cell wall biogenesis; peptidoglycan biosynthesis. Functionally, cell wall formation. The chain is D-alanine--D-alanine ligase from Helicobacter pylori (strain J99 / ATCC 700824) (Campylobacter pylori J99).